Consider the following 423-residue polypeptide: Histidinol dehydrogenase (423 aa).

The NAD(+) site is built by Tyr-116, Gln-177, and Asn-200. Ser-223, Gln-245, and His-248 together coordinate substrate. Residues Gln-245 and His-248 each contribute to the Zn(2+) site. Catalysis depends on proton acceptor residues Glu-313 and His-314. Residues His-314, Asp-347, Glu-401, and His-406 each contribute to the substrate site. Asp-347 lines the Zn(2+) pocket. His-406 serves as a coordination point for Zn(2+).

It belongs to the histidinol dehydrogenase family. It depends on Zn(2+) as a cofactor.

It catalyses the reaction L-histidinol + 2 NAD(+) + H2O = L-histidine + 2 NADH + 3 H(+). Its pathway is amino-acid biosynthesis; L-histidine biosynthesis; L-histidine from 5-phospho-alpha-D-ribose 1-diphosphate: step 9/9. Functionally, catalyzes the sequential NAD-dependent oxidations of L-histidinol to L-histidinaldehyde and then to L-histidine. This chain is Histidinol dehydrogenase, found in Staphylococcus saprophyticus subsp. saprophyticus (strain ATCC 15305 / DSM 20229 / NCIMB 8711 / NCTC 7292 / S-41).